A 274-amino-acid chain; its full sequence is Undecaprenyl-diphosphatase 1 (274 aa).

Helical transmembrane passes span Trp-8–Val-28, Ile-45–Ile-65, Phe-92–Phe-112, Leu-120–Ile-140, Phe-195–Ile-215, Ile-230–Met-250, and Gly-253–Leu-273.

This sequence belongs to the UppP family.

The protein resides in the cell membrane. It carries out the reaction di-trans,octa-cis-undecaprenyl diphosphate + H2O = di-trans,octa-cis-undecaprenyl phosphate + phosphate + H(+). Its function is as follows. Catalyzes the dephosphorylation of undecaprenyl diphosphate (UPP). Confers resistance to bacitracin. This Halalkalibacterium halodurans (strain ATCC BAA-125 / DSM 18197 / FERM 7344 / JCM 9153 / C-125) (Bacillus halodurans) protein is Undecaprenyl-diphosphatase 1.